The primary structure comprises 367 residues: Glutamate 5-kinase (367 aa).

Lys-10 contributes to the ATP binding site. Substrate-binding residues include Ser-50, Asp-137, and Asn-149. Thr-169–Asp-170 is an ATP binding site. The PUA domain maps to Ala-275 to Glu-353.

It belongs to the glutamate 5-kinase family.

The protein localises to the cytoplasm. It carries out the reaction L-glutamate + ATP = L-glutamyl 5-phosphate + ADP. Its pathway is amino-acid biosynthesis; L-proline biosynthesis; L-glutamate 5-semialdehyde from L-glutamate: step 1/2. Its function is as follows. Catalyzes the transfer of a phosphate group to glutamate to form L-glutamate 5-phosphate. The polypeptide is Glutamate 5-kinase (Salmonella paratyphi B (strain ATCC BAA-1250 / SPB7)).